We begin with the raw amino-acid sequence, 633 residues long: Probable potassium transport system protein Kup (633 aa).

Helical transmembrane passes span 21-41 (MLVA…LYTL), 61-81 (ILSL…MMFV), 112-132 (LLVV…MITP), 149-169 (GIDH…FLIQ), 176-196 (IGIL…ALGV), 217-237 (FFMV…LALT), 258-278 (WFLL…ALLL), 290-310 (LLAP…ATVI), 348-368 (IYIG…VIGF), 377-397 (AYGV…SAVM), 398-418 (LLLW…FLLV), and 430-450 (IVQG…LMTT).

This sequence belongs to the HAK/KUP transporter (TC 2.A.72) family.

The protein localises to the cell inner membrane. The catalysed reaction is K(+)(in) + H(+)(in) = K(+)(out) + H(+)(out). In terms of biological role, transport of potassium into the cell. Likely operates as a K(+):H(+) symporter. The chain is Probable potassium transport system protein Kup from Pseudomonas fluorescens (strain Pf0-1).